The primary structure comprises 484 residues: Poly(A) RNA polymerase GLD2 (484 aa).

A phosphoserine mark is found at Ser-62 and Ser-69. Positions 76-92 (KRISDEKAFPLDGKRQR) match the Nuclear localization signal motif. At Ser-95 the chain carries Phosphoserine. Positions 213 and 215 each coordinate Mg(2+). In terms of domain architecture, PAP-associated spans 386-440 (SLGDLLLGFLKYYATEFDWNTQMISVREAKAIPRPDDMEWRNKYICVEEPFDGTN).

This sequence belongs to the DNA polymerase type-B-like family. GLD2 subfamily. In terms of assembly, interacts with CPEB1, CPEB2, CPSF1 and PABPC1. Interacts with QKI isoform QKI7; promoting recruitment to miRNA miR-122 and miR-122 stabilization. It depends on Mg(2+) as a cofactor. Mn(2+) is required as a cofactor. In terms of tissue distribution, ubiquitous. In brain, it is highly expressed in the cerebral cortex, cerebellum, hippocampus and olfactory bulb.

The protein resides in the cytoplasm. It localises to the nucleus. The catalysed reaction is RNA(n) + ATP = RNA(n)-3'-adenine ribonucleotide + diphosphate. Its function is as follows. Cytoplasmic poly(A) RNA polymerase that adds successive AMP monomers to the 3'-end of specific RNAs, forming a poly(A) tail. In contrast to the canonical nuclear poly(A) RNA polymerase, it only adds poly(A) to selected cytoplasmic mRNAs. Does not play a role in replication-dependent histone mRNA degradation. Adds a single nucleotide to the 3' end of specific miRNAs, monoadenylation stabilizes and prolongs the activity of some but not all miRNAs. This chain is Poly(A) RNA polymerase GLD2 (Tent2), found in Mus musculus (Mouse).